The primary structure comprises 720 residues: Polyribonucleotide nucleotidyltransferase (720 aa).

Mg(2+)-binding residues include aspartate 484 and aspartate 490. Positions 551 to 610 constitute a KH domain; that stretch reads PRMYKINIDPSKIGSVIGSGGKTIRSIIEQTNTTVDIENDGTVVIGAIDEASAKKAIKII. An S1 motif domain is found at 620–688; sequence GSIYTGKVTR…NQGRVNLSHR (69 aa). The segment at 697–720 is disordered; the sequence is PISRNRDSQPRRPGPFRPSDRSNS.

The protein belongs to the polyribonucleotide nucleotidyltransferase family. Requires Mg(2+) as cofactor.

It is found in the cytoplasm. It catalyses the reaction RNA(n+1) + phosphate = RNA(n) + a ribonucleoside 5'-diphosphate. Its function is as follows. Involved in mRNA degradation. Catalyzes the phosphorolysis of single-stranded polyribonucleotides processively in the 3'- to 5'-direction. The polypeptide is Polyribonucleotide nucleotidyltransferase (Dehalococcoides mccartyi (strain ATCC BAA-2100 / JCM 16839 / KCTC 5957 / BAV1)).